The following is a 444-amino-acid chain: CBL-interacting serine/threonine-protein kinase 1 (444 aa).

Positions 20–275 constitute a Protein kinase domain; it reads YELGRTLGEG…VVGIKASEWF (256 aa). ATP-binding positions include 26–34 and K49; that span reads LGEGNFGKV. D143 serves as the catalytic Proton acceptor. The activation loop stretch occupies residues 161–190; sequence DFGLSALPQHFRDDGLLHTTCGSPNYVAPE. Position 165 is a phosphoserine (S165). T179 bears the Phosphothreonine mark. Residues 313–337 form the NAF domain; sequence DSPTIINAFQLIGMSSFLDLSGFFE. Residues 343 to 372 are PPI; the sequence is ERRIRFTSNSSAKDLLEKIETAVTEMGFSV.

Belongs to the protein kinase superfamily. CAMK Ser/Thr protein kinase family. SNF1 subfamily. As to quaternary structure, interacts with CBL1. Interacts with CBL2. Interacts with CBL3. Interacts with CBL9. Interacts with ECT1 and ECT2. The cofactor is Mn(2+). In terms of processing, autophosphorylated. In terms of tissue distribution, ubiquitous.

The catalysed reaction is L-seryl-[protein] + ATP = O-phospho-L-seryl-[protein] + ADP + H(+). It catalyses the reaction L-threonyl-[protein] + ATP = O-phospho-L-threonyl-[protein] + ADP + H(+). Functionally, CIPK serine-threonine protein kinases interact with CBL proteins. Binding of a CBL protein to the regulatory NAF domain of CIPK protein lead to the activation of the kinase in a calcium-dependent manner. The sequence is that of CBL-interacting serine/threonine-protein kinase 1 (CIPK1) from Arabidopsis thaliana (Mouse-ear cress).